Consider the following 660-residue polypeptide: Probable E3 ubiquitin ligase complex SCF subunit sconB (660 aa).

Residues 1 to 13 are compositionally biased toward basic and acidic residues; the sequence is MHNENSVLRDAKE. Disordered stretches follow at residues 1-34 and 86-108; these read MHNENSVLRDAKESLFNPTPRKQGLPEDNTMTPY and LGTGISKSAGPPPRPDLKCRRQA. Positions 175-221 constitute an F-box domain; the sequence is IDFITALPPEISFKILSYLDTASLCRAAQVSRGWKCLADDDVVWHRM. WD repeat units lie at residues 340–379, 381–419, 421–457, 459–500, 542–586, 587–626, and 629–660; these read GHTNGVMCLQFEDNILATGSYDTTIKIWDMETGEELRTLT, HTSGIRCLQFDETKLISGSIDRTLKVWNWRTGECISTYT, HLGGIIGLHFQNSILASGSTDKTVKIWNFEDKSTFLL, GHSD…RTFQ, SQVS…CLRT, FFGHLEGVWALSADTLRIVSGAEDRMVKIWDPRTGKCERT, and GHSGPVTCVGLGDSCFVTGSEDCEVRIYSFKN. The interval 521–553 is disordered; the sequence is GHDASHEEDSNASVSGDESPSSQVSCSPTAAFF. A compositionally biased stretch (polar residues) spans 531-548; it reads NASVSGDESPSSQVSCSP.

It belongs to the WD repeat MET30/SCONB/SCON-2 family. Component of the SCF(sconB) E3 ubiquitin ligase complex.

Its pathway is protein modification; protein ubiquitination. Functionally, component of the SCF(sconB) E3 ubiquitin ligase complex involved in the regulation of sulfur metabolite repression, probably by mediating the inactivation or degradation of the metR transcription factor. The chain is Probable E3 ubiquitin ligase complex SCF subunit sconB (sconB) from Talaromyces marneffei (strain ATCC 18224 / CBS 334.59 / QM 7333) (Penicillium marneffei).